The primary structure comprises 448 residues: T-box transcription factor T homolog 1 (448 aa).

Residues 54 to 224 (LWDKFNALTN…YNPFAKAFLD (171 aa)) constitute a DNA-binding region (T-box). 2 disordered regions span residues 290–312 (APYP…TAAS) and 401–448 (TTAS…PPSL). Positions 417–442 (STDSGYGHSTTPPAPQTRITSNNWSP) are enriched in polar residues.

It localises to the nucleus. Involved in the transcriptional regulation of genes required for mesoderm formation and differentiation. This is T-box transcription factor T homolog 1 from Branchiostoma floridae (Florida lancelet).